The following is a 354-amino-acid chain: MSYVLNLDRIALYIHYERELSEDEKTSIKQYLKKMVEENKTFDELKGEKKDFKEENLDIFNKSVEYLKKNGVPNPLLDTEYIFSDVLKVNKNTLKYSMSREIKEEDKNKIREMLVLRAKKRKPLQYILGEWEFYGLPFKMSEGVLIPRADTEILVEQCIQLMREVEEPNILDIGSGSGAISIAVANELKSSSVTGIDINEKAIKLAIENKILNKIENVNFIESNLFGKLDKDFKYDLIVSNPPYISKDEYETLMPEVKNYEPQNALTDLGDGLHFYKEISKLAGEYLKDTGYLAFEIGYNQAKDVSKILQDNNFAILSIVKDYGGNDRVIIAKKAIKAENFEEIEEEEDVNLSE.

S-adenosyl-L-methionine contacts are provided by residues 174–178, D197, and N241; that span reads GSGSG. A substrate-binding site is contributed by 241–244; sequence NPPY.

The protein belongs to the protein N5-glutamine methyltransferase family. PrmC subfamily.

The catalysed reaction is L-glutaminyl-[peptide chain release factor] + S-adenosyl-L-methionine = N(5)-methyl-L-glutaminyl-[peptide chain release factor] + S-adenosyl-L-homocysteine + H(+). Its function is as follows. Methylates the class 1 translation termination release factors RF1/PrfA and RF2/PrfB on the glutamine residue of the universally conserved GGQ motif. In Fusobacterium nucleatum subsp. nucleatum (strain ATCC 25586 / DSM 15643 / BCRC 10681 / CIP 101130 / JCM 8532 / KCTC 2640 / LMG 13131 / VPI 4355), this protein is Release factor glutamine methyltransferase.